Here is a 287-residue protein sequence, read N- to C-terminus: 3-methyl-2-oxobutanoate hydroxymethyltransferase (287 aa).

A compositionally biased stretch (polar residues) spans 1-19 (MSTLPKTLTLDTSTSRANP). Residues 1 to 24 (MSTLPKTLTLDTSTSRANPTPQPM) form a disordered region. 2 residues coordinate Mg(2+): Asp-66 and Asp-105. 3-methyl-2-oxobutanoate is bound by residues 66-67 (DS), Asp-105, and Lys-135. Glu-137 is a Mg(2+) binding site. Glu-204 functions as the Proton acceptor in the catalytic mechanism.

This sequence belongs to the PanB family. As to quaternary structure, homodecamer; pentamer of dimers. It depends on Mg(2+) as a cofactor.

It is found in the cytoplasm. The catalysed reaction is 3-methyl-2-oxobutanoate + (6R)-5,10-methylene-5,6,7,8-tetrahydrofolate + H2O = 2-dehydropantoate + (6S)-5,6,7,8-tetrahydrofolate. The protein operates within cofactor biosynthesis; (R)-pantothenate biosynthesis; (R)-pantoate from 3-methyl-2-oxobutanoate: step 1/2. In terms of biological role, catalyzes the reversible reaction in which hydroxymethyl group from 5,10-methylenetetrahydrofolate is transferred onto alpha-ketoisovalerate to form ketopantoate. This chain is 3-methyl-2-oxobutanoate hydroxymethyltransferase, found in Sphingopyxis alaskensis (strain DSM 13593 / LMG 18877 / RB2256) (Sphingomonas alaskensis).